The primary structure comprises 739 residues: Sulfate transporter (739 aa).

Basic and acidic residues-rich tracts occupy residues 1–17 (MSSE…RDLP) and 31–46 (TQRR…ETGH). Residues 1-47 (MSSENKEQHDLSPRDLPEEAFGFPSELPLETQRRSGTDLRQSETGHG) form a disordered region. Position 12 is a phosphoserine (Ser-12). Helical transmembrane passes span 112–132 (VMSG…YSLL) and 137–157 (PIYG…FGTS). N-linked (GlcNAc...) asparagine glycosylation is present at Asn-205. Transmembrane regions (helical) follow at residues 227–247 (FMAG…VSVY) and 255–275 (GFVT…LLGL). Asn-357 carries an N-linked (GlcNAc...) asparagine glycan. The next 4 helical transmembrane spans lie at 378 to 398 (LIPN…AITV), 420 to 440 (AIGF…SAAL), 455 to 475 (LSAI…APLF), and 524 to 544 (LLST…CVIL). Residues 568-719 (TYKNLRSKSG…YSLSEAVAFA (152 aa)) enclose the STAS domain.

It belongs to the SLC26A/SulP transporter (TC 2.A.53) family. N-glycosylated. Distributed mainly in the thymus, testis and osteoblastic cells. Highly expressed in the bone, cartilage, kidney and colon.

It is found in the cell membrane. It localises to the apical cell membrane. The catalysed reaction is oxalate(in) + sulfate(out) = oxalate(out) + sulfate(in). It carries out the reaction sulfate(out) + 2 chloride(in) = sulfate(in) + 2 chloride(out). It catalyses the reaction oxalate(out) + 2 chloride(in) = oxalate(in) + 2 chloride(out). The enzyme catalyses bromide(in) + chloride(out) = bromide(out) + chloride(in). The catalysed reaction is nitrate(in) + chloride(out) = nitrate(out) + chloride(in). It carries out the reaction iodide(in) + chloride(out) = iodide(out) + chloride(in). Its function is as follows. Sulfate transporter which mediates sulfate uptake into chondrocytes in order to maintain adequate sulfation of proteoglycans which is needed for cartilage development. Mediates electroneutral anion exchange of sulfate ions for oxalate ions, sulfate and oxalate ions for chloride and/or hydroxyl ions and chloride ions for bromide, iodide and nitrate ions. The coupling of sulfate transport to both hydroxyl and chloride ions likely serves to ensure transport at both acidic pH when most sulfate uptake is mediated by sulfate-hydroxide exchange and alkaline pH when most sulfate uptake is mediated by sulfate-chloride exchange. Essential for chondrocyte proliferation, differentiation and cell size expansion. This chain is Sulfate transporter (Slc26a2), found in Mus musculus (Mouse).